Reading from the N-terminus, the 321-residue chain is Olfactory receptor 56B34 (321 aa).

The Extracellular portion of the chain corresponds to 1–36; sequence MGTALHETNSSEVHVSEFILLGFPGIHEFQIWLSLP. A helical membrane pass occupies residues 37–57; it reads MALLYIVALGANLLILITIYL. Residues 58-70 are Cytoplasmic-facing; that stretch reads EPTLHQPMYQFLG. Residues 71–91 traverse the membrane as a helical segment; sequence ILAAVDIGLATTSMPKILAIL. The Extracellular portion of the chain corresponds to 92 to 105; the sequence is WFDAKTISLPECFA. Cys103 and Cys185 are oxidised to a cystine. A helical transmembrane segment spans residues 106–126; that stretch reads QIYAIHTFMCMESGVFLCMAI. The Cytoplasmic portion of the chain corresponds to 127–128; that stretch reads DR. Residues 129-149 form a helical membrane-spanning segment; it reads YVAICYPLQYPSIVTEAFVIK. Residues 150–207 lie on the Extracellular side of the membrane; that stretch reads ATLSMLLRNGLLTIPVPVLAAQRQYCSRNEIDHCLCSNLGVISLACDDITVNRFYQLA. Residues 208–228 form a helical membrane-spanning segment; that stretch reads LAWLVVGSDMILVYASYALII. The Cytoplasmic portion of the chain corresponds to 229 to 250; the sequence is RSVLRLNSTEAASKALSTCSSH. A helical transmembrane segment spans residues 251–271; that stretch reads LILIMFYYTAIVIVSVTHLAG. Topologically, residues 272–275 are extracellular; it reads RRVP. A helical transmembrane segment spans residues 276–296; sequence LIPVLLNVMHIVIPPSLNPVV. The Cytoplasmic segment spans residues 297 to 321; the sequence is YALRTQELKVGFRKVFSLSEFVSRK.

It belongs to the G-protein coupled receptor 1 family.

The protein localises to the cell membrane. In terms of biological role, odorant receptor. This is Olfactory receptor 56B34 from Mus musculus (Mouse).